The primary structure comprises 1159 residues: ATP-dependent helicase/deoxyribonuclease subunit B (1159 aa).

This sequence belongs to the helicase family. AddB/RexB type 2 subfamily. Heterodimer of AddA and RexB. It depends on Mg(2+) as a cofactor.

Functionally, the heterodimer acts as both an ATP-dependent DNA helicase and an ATP-dependent, dual-direction single-stranded exonuclease. Recognizes the chi site generating a DNA molecule suitable for the initiation of homologous recombination. This subunit has 5' -&gt; 3' nuclease activity but not helicase activity. This is ATP-dependent helicase/deoxyribonuclease subunit B from Leuconostoc mesenteroides subsp. mesenteroides (strain ATCC 8293 / DSM 20343 / BCRC 11652 / CCM 1803 / JCM 6124 / NCDO 523 / NBRC 100496 / NCIMB 8023 / NCTC 12954 / NRRL B-1118 / 37Y).